Consider the following 629-residue polypeptide: tRNA uridine 5-carboxymethylaminomethyl modification enzyme MnmG (629 aa).

FAD is bound by residues 13 to 18, Val-125, and Ser-180; that span reads GGGHAG. 273–287 serves as a coordination point for NAD(+); the sequence is GPRYCPSIEDKVMRF. Residue Gln-370 coordinates FAD.

The protein belongs to the MnmG family. Homodimer. Heterotetramer of two MnmE and two MnmG subunits. Requires FAD as cofactor.

The protein resides in the cytoplasm. Its function is as follows. NAD-binding protein involved in the addition of a carboxymethylaminomethyl (cmnm) group at the wobble position (U34) of certain tRNAs, forming tRNA-cmnm(5)s(2)U34. The sequence is that of tRNA uridine 5-carboxymethylaminomethyl modification enzyme MnmG from Cronobacter sakazakii (strain ATCC BAA-894) (Enterobacter sakazakii).